A 342-amino-acid polypeptide reads, in one-letter code: L-threonine 3-dehydrogenase (342 aa).

A Zn(2+)-binding site is contributed by Cys-38. Catalysis depends on charge relay system residues Thr-40 and His-43. Residues His-63, Glu-64, Cys-93, Cys-96, Cys-99, and Cys-107 each contribute to the Zn(2+) site. NAD(+)-binding positions include Ile-175, Asp-195, Arg-200, 262–264, and 286–287; these read LGI and IY.

The protein belongs to the zinc-containing alcohol dehydrogenase family. Homotetramer. Zn(2+) is required as a cofactor.

The protein localises to the cytoplasm. It carries out the reaction L-threonine + NAD(+) = (2S)-2-amino-3-oxobutanoate + NADH + H(+). It participates in amino-acid degradation; L-threonine degradation via oxydo-reductase pathway; glycine from L-threonine: step 1/2. Its function is as follows. Catalyzes the NAD(+)-dependent oxidation of L-threonine to 2-amino-3-ketobutyrate. The chain is L-threonine 3-dehydrogenase from Burkholderia ambifaria (strain MC40-6).